The primary structure comprises 232 residues: Early E1A protein (232 aa).

An interaction with RB1 in competition with E2F1 region spans residues 40–48; the sequence is PTLHDLFDV. The span at 69 to 84 shows a compositional bias: low complexity; sequence TDSSASTEADSGFSPL. A disordered region spans residues 69-97; that stretch reads TDSSASTEADSGFSPLSTPPVSPIPPHPT. The span at 85–97 shows a compositional bias: pro residues; the sequence is STPPVSPIPPHPT. Residues 107–111 carry the LXCXE motif, interaction with host RB1 motif; that stretch reads LLCLE. A zinc finger spans residues 146 to 164; sequence CLRCAFYQEQDDNALCGLC. The interval 175 to 232 is disordered; the sequence is SAGAEEEDDEVIFVSAKPGGRKRSAATPCEPDGVSKRPCVPEPEQTEPLDLSLKPRPN. The short motif at 222–226 is the PXDLS motif, CTBP-binding element; the sequence is PLDLS. A Nuclear localization signal motif is present at residues 228–232; sequence KPRPN.

The protein belongs to the adenoviridae E1A protein family. In terms of assembly, interacts with host UBE2I; this interaction interferes with polySUMOylation. Interacts with host RB1; this interaction induces the aberrant dissociation of RB1-E2F1 complex thereby disrupting the activity of RB1 and activating E2F1-regulated genes. Interacts with host ATF7; the interaction enhances ATF7-mediated viral transactivation activity which requires the zinc binding domains of both proteins. Isoform early E1A 32 kDa protein and isoform early E1A 26 kDa protein interact (via N-terminus) with CUL1 and E3 ubiquitin ligase RBX1; these interactions inhibit RBX1-CUL1-dependent elongation reaction of ubiquitin chains and attenuate ubiquitination of SCF(FBXW7) target proteins. Interacts (via PXLXP motif) with host ZMYND11/BS69 (via MYND-type zinc finger); this interaction inhibits E1A mediated transactivation. Interacts with host EP300; this interaction stimulates the acetylation of RB1 by recruiting EP300 and RB1 into a multimeric-protein complex. Interacts with host CTBP1 and CTBP2; this interaction seems to potentiate viral replication. Interacts with host DCAF7. Interacts with host DYRK1A. Interacts with host KPNA4; this interaction allows E1A import into the host nucleus. Interacts with host EP400; this interaction stabilizes MYC. Interacts with host TBP protein; this interaction probably disrupts the TBP-TATA complex.

The protein localises to the host nucleus. Functionally, plays a role in viral genome replication by driving entry of quiescent cells into the cell cycle. Stimulation of progression from G1 to S phase allows the virus to efficiently use the cellular DNA replicating machinery to achieve viral genome replication. E1A protein has both transforming and trans-activating activities. Induces the disassembly of the E2F1 transcription factor from RB1 by direct competition for the same binding site on RB1, with subsequent transcriptional activation of E2F1-regulated S-phase genes and of the E2 region of the adenoviral genome. Release of E2F1 leads to the ARF-mediated inhibition of MDM2 and causes TP53/p53 to accumulate because it is not targeted for degradation by MDM2-mediated ubiquitination anymore. This increase in TP53, in turn, would arrest the cell proliferation and direct its death but this effect is counteracted by the viral protein E1B-55K. Inactivation of the ability of RB1 to arrest the cell cycle is critical for cellular transformation, uncontrolled cellular growth and proliferation induced by viral infection. Interaction with RBX1 and CUL1 inhibits ubiquitination of the proteins targeted by SCF(FBXW7) ubiquitin ligase complex, and may be linked to unregulated host cell proliferation. The tumorigenesis-restraining activity of E1A may be related to the disruption of the host CtBP-CtIP complex through the CtBP binding motif. The chain is Early E1A protein from Canine adenovirus serotype 2 (strain Toronto A 26-61) (CAdV-2).